Reading from the N-terminus, the 206-residue chain is Probable N-acetyltransferase 14 (206 aa).

The region spanning 6-206 is the N-acetyltransferase domain; it reads LSVREMREDE…TLVREFSKDL (201 aa). Residues 57–77 traverse the membrane as a helical segment; the sequence is FVLASFALALLLPVFLAVAAV.

The protein belongs to the camello family. Expressed in K-562 and HeLa cell lines and in brain.

It is found in the membrane. Probable acetyltransferase. Its function is as follows. May act as a transcription factor that regulates the expression of coproporphyrinogen oxidase by binding to a promoter regulatory element. The sequence is that of Probable N-acetyltransferase 14 (NAT14) from Homo sapiens (Human).